The primary structure comprises 337 residues: Serpentine receptor class delta-50 (337 aa).

7 helical membrane-spanning segments follow: residues 10–30 (VLIL…SQLL), 48–68 (IYLF…FVLQ), 107–127 (VLFH…IIAF), 147–167 (QLVI…LSPN), 202–222 (SSQT…ALVF), 250–270 (GLTL…TYYI), and 280–300 (LFVE…DPLL).

The protein belongs to the nematode receptor-like protein srd family.

The protein resides in the membrane. This Caenorhabditis elegans protein is Serpentine receptor class delta-50.